A 165-amino-acid polypeptide reads, in one-letter code: Nucleotide-binding protein Tfu_2672 (165 aa).

Belongs to the YajQ family.

Its function is as follows. Nucleotide-binding protein. This chain is Nucleotide-binding protein Tfu_2672, found in Thermobifida fusca (strain YX).